The chain runs to 215 residues: Large ribosomal subunit protein bL25 (215 aa).

Residues 192–202 show a composition bias toward acidic residues; the sequence is EEEEVEEEVAE. A disordered region spans residues 192–215; it reads EEEEVEEEVAEPEVIKRKEEEEEE. The segment covering 204-215 has biased composition (basic and acidic residues); it reads EVIKRKEEEEEE.

Belongs to the bacterial ribosomal protein bL25 family. CTC subfamily. As to quaternary structure, part of the 50S ribosomal subunit; part of the 5S rRNA/L5/L18/L25 subcomplex. Contacts the 5S rRNA. Binds to the 5S rRNA independently of L5 and L18.

Its function is as follows. This is one of the proteins that binds to the 5S RNA in the ribosome where it forms part of the central protuberance. The protein is Large ribosomal subunit protein bL25 of Thermotoga neapolitana (strain ATCC 49049 / DSM 4359 / NBRC 107923 / NS-E).